The primary structure comprises 249 residues: MFFSAALRARAAGLTAQWGRHVRNLHKTAMQNGAGGALFVHRDTPENNPDTPFDFTPENYKRIEAIVKNYPEGHKAAAVLPVLDLAQRQNGWLPISAMNKVAEVLQVPPMRVYEVATFYTMYNRKPVGKYHIQVCTTTPCMLRNSDSILEAIQKKLGIKVGETTPDKLFTLIEVECLGACVNAPMVQINDNYYEDLTAKDIEEIIDELKAGKIPKPGPRSGRFSCEPAGGLTSLTEPPKGPGFGVQAGL.

The N-terminal 32 residues, 1 to 32 (MFFSAALRARAAGLTAQWGRHVRNLHKTAMQN), are a transit peptide targeting the mitochondrion. Residue lysine 61 is modified to N6-acetyllysine. [2Fe-2S] cluster is bound by residues cysteine 135, cysteine 140, cysteine 176, and cysteine 180. Residue tyrosine 193 is modified to Phosphotyrosine; by SRC. The tract at residues 213 to 249 (IPKPGPRSGRFSCEPAGGLTSLTEPPKGPGFGVQAGL) is disordered.

The protein belongs to the complex I 24 kDa subunit family. As to quaternary structure, core subunit of respiratory chain NADH dehydrogenase (Complex I) which is composed of 45 different subunits. This is a component of the flavoprotein-sulfur (FP) fragment of the enzyme. [2Fe-2S] cluster is required as a cofactor.

The protein resides in the mitochondrion inner membrane. The enzyme catalyses a ubiquinone + NADH + 5 H(+)(in) = a ubiquinol + NAD(+) + 4 H(+)(out). Its function is as follows. Core subunit of the mitochondrial membrane respiratory chain NADH dehydrogenase (Complex I) which catalyzes electron transfer from NADH through the respiratory chain, using ubiquinone as an electron acceptor. Parts of the peripheral arm of the enzyme, where the electrons from NADH are accepted by flavin mononucleotide (FMN) and then passed along a chain of iron-sulfur clusters by electron tunnelling to the final acceptor ubiquinone. Contains one iron-sulfur cluster. The polypeptide is NADH dehydrogenase [ubiquinone] flavoprotein 2, mitochondrial (Gorilla gorilla gorilla (Western lowland gorilla)).